Consider the following 349-residue polypeptide: ATPase GET3 (349 aa).

Position 26 to 33 (26 to 33 (KGGVGKTT)) interacts with ATP. Aspartate 57 is a catalytic residue. ATP is bound by residues glutamate 240 and asparagine 267. Zn(2+) contacts are provided by cysteine 280 and cysteine 283.

This sequence belongs to the arsA ATPase family. In terms of assembly, homodimer. Component of the Golgi to ER traffic (GET) complex, which is composed of GET1, GET2 and GET3. Within the complex, GET1 and GET2 form a heterotetramer which is stabilized by phosphatidylinositol binding and which binds to the GET3 homodimer. Interacts with the chloride channel protein GEF1.

It is found in the cytoplasm. The protein localises to the endoplasmic reticulum. Its subcellular location is the golgi apparatus. Functionally, ATPase required for the post-translational delivery of tail-anchored (TA) proteins to the endoplasmic reticulum. Recognizes and selectively binds the transmembrane domain of TA proteins in the cytosol. This complex then targets to the endoplasmic reticulum by membrane-bound receptors GET1 and GET2, where the tail-anchored protein is released for insertion. This process is regulated by ATP binding and hydrolysis. ATP binding drives the homodimer towards the closed dimer state, facilitating recognition of newly synthesized TA membrane proteins. ATP hydrolysis is required for insertion. Subsequently, the homodimer reverts towards the open dimer state, lowering its affinity for the GET1-GET2 receptor, and returning it to the cytosol to initiate a new round of targeting. Cooperates with the HDEL receptor ERD2 to mediate the ATP-dependent retrieval of resident ER proteins that contain a C-terminal H-D-E-L retention signal from the Golgi to the ER. Involved in low-level resistance to the oxyanions arsenite and arsenate, and in heat tolerance. This chain is ATPase GET3, found in Kluyveromyces lactis (strain ATCC 8585 / CBS 2359 / DSM 70799 / NBRC 1267 / NRRL Y-1140 / WM37) (Yeast).